Here is a 245-residue protein sequence, read N- to C-terminus: GATA zinc finger domain-containing protein 1 (245 aa).

The segment at 9 to 33 adopts a GATA-type zinc-finger fold; the sequence is CSMCKTNTSSMWKKGSQGEILCNNC. Residues 39-70 show a composition bias toward low complexity; sequence TAAGGNNNNNSSSSTSGSSSYTGTTFASTSTS. The interval 39–110 is disordered; it reads TAAGGNNNNN…PAAEKKVSTK (72 aa). The span at 71-80 shows a compositional bias: polar residues; the sequence is QQSNGGNTKQ.

Its subcellular location is the nucleus. Component of some chromatin complex recruited to chromatin sites methylated 'Lys-4' of histone H3 (H3K4me), with a preference for trimethylated form (H3K4me3). The polypeptide is GATA zinc finger domain-containing protein 1 (gatad1) (Xenopus laevis (African clawed frog)).